We begin with the raw amino-acid sequence, 200 residues long: Molybdenum cofactor guanylyltransferase (200 aa).

Residues 10–12, Lys23, Asn51, Asp69, and Asp99 contribute to the GTP site; that span reads LAG. Asp99 contacts Mg(2+).

This sequence belongs to the MobA family. As to quaternary structure, monomer. Mg(2+) is required as a cofactor.

The protein localises to the cytoplasm. It carries out the reaction Mo-molybdopterin + GTP + H(+) = Mo-molybdopterin guanine dinucleotide + diphosphate. Transfers a GMP moiety from GTP to Mo-molybdopterin (Mo-MPT) cofactor (Moco or molybdenum cofactor) to form Mo-molybdopterin guanine dinucleotide (Mo-MGD) cofactor. The chain is Molybdenum cofactor guanylyltransferase from Shewanella halifaxensis (strain HAW-EB4).